Reading from the N-terminus, the 38-residue chain is Large ribosomal subunit protein bL36 (38 aa).

The protein belongs to the bacterial ribosomal protein bL36 family.

In Cupriavidus metallidurans (strain ATCC 43123 / DSM 2839 / NBRC 102507 / CH34) (Ralstonia metallidurans), this protein is Large ribosomal subunit protein bL36.